Here is a 160-residue protein sequence, read N- to C-terminus: Ribosomal RNA large subunit methyltransferase H (160 aa).

S-adenosyl-L-methionine is bound by residues leucine 77, glycine 109, and phenylalanine 128–leucine 133.

This sequence belongs to the RNA methyltransferase RlmH family. In terms of assembly, homodimer.

It localises to the cytoplasm. It carries out the reaction pseudouridine(1915) in 23S rRNA + S-adenosyl-L-methionine = N(3)-methylpseudouridine(1915) in 23S rRNA + S-adenosyl-L-homocysteine + H(+). Specifically methylates the pseudouridine at position 1915 (m3Psi1915) in 23S rRNA. The protein is Ribosomal RNA large subunit methyltransferase H of Oenococcus oeni (strain ATCC BAA-331 / PSU-1).